Reading from the N-terminus, the 437-residue chain is Zinc finger CCCH domain-containing protein 40 (437 aa).

Residues M6–A33 form a C3H1-type zinc finger. Positions L35–D107 are disordered. The segment covering H48–G85 has biased composition (basic and acidic residues). A coiled-coil region spans residues N145–A244. Phosphoserine is present on S259. Disordered regions lie at residues R266–F360 and E380–V437. Residues R307–R319 are compositionally biased toward basic and acidic residues. Composition is skewed to acidic residues over residues E333–D343 and D383–P392. Basic and acidic residues predominate over residues M426–V437.

This Arabidopsis thaliana (Mouse-ear cress) protein is Zinc finger CCCH domain-containing protein 40.